Consider the following 502-residue polypeptide: Glycerol kinase (502 aa).

Threonine 14 provides a ligand contact to ADP. 3 residues coordinate ATP: threonine 14, threonine 15, and serine 16. Residue threonine 14 coordinates sn-glycerol 3-phosphate. Arginine 18 contacts ADP. The sn-glycerol 3-phosphate site is built by arginine 84, glutamate 85, and tyrosine 136. Glycerol-binding residues include arginine 84, glutamate 85, and tyrosine 136. Histidine 232 carries the phosphohistidine; by HPr modification. Sn-glycerol 3-phosphate is bound at residue aspartate 246. Aspartate 246 and glutamine 247 together coordinate glycerol. Residues threonine 268 and glycine 311 each contribute to the ADP site. ATP contacts are provided by threonine 268, glycine 311, glutamine 315, and glycine 412. The ADP site is built by glycine 412 and asparagine 416.

The protein belongs to the FGGY kinase family. In terms of assembly, homotetramer and homodimer (in equilibrium). The phosphoenolpyruvate-dependent sugar phosphotransferase system (PTS), including enzyme I, and histidine-containing protein (HPr) are required for the phosphorylation, which leads to the activation of the enzyme.

It catalyses the reaction glycerol + ATP = sn-glycerol 3-phosphate + ADP + H(+). It functions in the pathway polyol metabolism; glycerol degradation via glycerol kinase pathway; sn-glycerol 3-phosphate from glycerol: step 1/1. With respect to regulation, activated by phosphorylation and inhibited by fructose 1,6-bisphosphate (FBP). Functionally, key enzyme in the regulation of glycerol uptake and metabolism. Catalyzes the phosphorylation of glycerol to yield sn-glycerol 3-phosphate. The protein is Glycerol kinase of Streptococcus pneumoniae (strain 70585).